Consider the following 680-residue polypeptide: DNA-directed RNA polymerase subunit beta' (680 aa).

Zn(2+) contacts are provided by Cys-69, Cys-71, Cys-87, and Cys-90. Residues Asp-489, Asp-491, and Asp-493 each contribute to the Mg(2+) site.

Belongs to the RNA polymerase beta' chain family. RpoC1 subfamily. In terms of assembly, in plastids the minimal PEP RNA polymerase catalytic core is composed of four subunits: alpha, beta, beta', and beta''. When a (nuclear-encoded) sigma factor is associated with the core the holoenzyme is formed, which can initiate transcription. Mg(2+) serves as cofactor. Zn(2+) is required as a cofactor.

The protein localises to the plastid. It localises to the chloroplast. The catalysed reaction is RNA(n) + a ribonucleoside 5'-triphosphate = RNA(n+1) + diphosphate. Functionally, DNA-dependent RNA polymerase catalyzes the transcription of DNA into RNA using the four ribonucleoside triphosphates as substrates. In Aethionema cordifolium (Lebanon stonecress), this protein is DNA-directed RNA polymerase subunit beta'.